Consider the following 393-residue polypeptide: Probable acetyl-CoA acyltransferase (393 aa).

Cys-88 functions as the Acyl-thioester intermediate in the catalytic mechanism. Catalysis depends on proton acceptor residues His-349 and Cys-378.

Belongs to the thiolase-like superfamily. Thiolase family.

The protein resides in the cytoplasm. It carries out the reaction 2 acetyl-CoA = acetoacetyl-CoA + CoA. In Staphylococcus aureus (strain NCTC 8325 / PS 47), this protein is Probable acetyl-CoA acyltransferase.